We begin with the raw amino-acid sequence, 142 residues long: Nucleoside diphosphate kinase (142 aa).

ATP is bound by residues K11, F59, R87, T93, R107, and N117. H120 serves as the catalytic Pros-phosphohistidine intermediate.

Belongs to the NDK family. Homotetramer. Mg(2+) is required as a cofactor.

It is found in the cytoplasm. It carries out the reaction a 2'-deoxyribonucleoside 5'-diphosphate + ATP = a 2'-deoxyribonucleoside 5'-triphosphate + ADP. The catalysed reaction is a ribonucleoside 5'-diphosphate + ATP = a ribonucleoside 5'-triphosphate + ADP. Functionally, major role in the synthesis of nucleoside triphosphates other than ATP. The ATP gamma phosphate is transferred to the NDP beta phosphate via a ping-pong mechanism, using a phosphorylated active-site intermediate. The polypeptide is Nucleoside diphosphate kinase (Aquifex aeolicus (strain VF5)).